A 380-amino-acid polypeptide reads, in one-letter code: Alcohol dehydrogenase 1 (380 aa).

Residues Cys-48, Thr-50, His-70, Cys-100, Cys-103, Cys-106, Cys-114, and Cys-178 each coordinate Zn(2+). Thr-50 and His-70 together coordinate an alcohol. Thr-50 is a binding site for NAD(+). NAD(+) is bound by residues 203–208 (GLGAVG), Asp-227, Arg-232, Thr-273, Val-296, 296–298 (VGV), and Arg-373.

The protein belongs to the zinc-containing alcohol dehydrogenase family. In terms of assembly, homodimer. Zn(2+) is required as a cofactor.

It is found in the cytoplasm. It carries out the reaction a primary alcohol + NAD(+) = an aldehyde + NADH + H(+). The catalysed reaction is a secondary alcohol + NAD(+) = a ketone + NADH + H(+). This is Alcohol dehydrogenase 1 from Pisum sativum (Garden pea).